A 724-amino-acid polypeptide reads, in one-letter code: NAD(+) hydrolase SARM1 (724 aa).

A mitochondrion-targeting transit peptide spans 1–27; sequence MVLTLLFSAYKLCRFFIMSGPRPGADR. Residues 60–100 form an ARM 1 repeat; the sequence is EVQGALERSLPELQQALSELKQASAAQAVGAGLAEVFQLVE. Residues Trp-103, Arg-110, 149-157, and 190-193 contribute to the NAD(+) site; these read EQILVAENR and HMFK. ARM repeat units follow at residues 114–153, 155–193, 196–235, 237–280, 281–314, 315–354, and 359–402; these read QGLC…QILV, ENRD…HMFK, EETC…NCAL, GGQT…LATN, KEVE…CLVD, ASDT…AEAA, and QGKT…EEVP. 2 consecutive SAM domains span residues 412-476 and 486-548; these read WKEA…LKTF and NLAD…MLHS. 2 positions are modified to phosphoserine: Ser-548 and Ser-558. A TIR domain is found at 560–703; sequence DTPDVFISYR…KIIRFLQGRP (144 aa). NAD(+)-binding positions include 569–570 and Glu-599; that span reads RR. Glu-642 is an active-site residue. Residues 703–717 are compositionally biased toward polar residues; the sequence is PSQDSSAGSDTSLEG. The tract at residues 703-724 is disordered; sequence PSQDSSAGSDTSLEGATSMGLP.

This sequence belongs to the SARM1 family. In terms of assembly, homooctamer; forms an octameric ring via SAM domains. Interacts with TICAM1/TRIF and thereby interferes with TICAM1/TRIF function. Interacts with MAPK10/JNK3 and SDC2 (via cytoplasmic domain). Post-translationally, phosphorylation at Ser-548 by JNK kinases (MAPK8, MAPK9 and /or MAPK10) enhance the NAD(+) hydrolase (NADase) activity. Phosphorylation at Ser-548 and subsequent activation takes place in response to oxidative stress conditions and inhibits mitochondrial respiration. Phosphorylation at Ser-548 increases in response to cerebral ischemia/reperfusion (I/R) injury.

The protein localises to the cytoplasm. It is found in the cell projection. The protein resides in the axon. It localises to the dendrite. Its subcellular location is the synapse. The protein localises to the mitochondrion. The enzyme catalyses NAD(+) + H2O = ADP-D-ribose + nicotinamide + H(+). The catalysed reaction is NAD(+) = cyclic ADP-beta-D-ribose + nicotinamide + H(+). It carries out the reaction NADP(+) + H2O = ADP-D-ribose 2'-phosphate + nicotinamide + H(+). Autoinhibited: in the inactive state, the enzymatic TIR domain is held apart by the autoinhibiting ARM repeats. NAD(+)-binding to ARM repeats maintains an inactive state by promoting interaction between ARM repeats and the TIR domain, thereby facilitating inhibition of the enzymatic TIR domain. Following activation, possibly by nicotinamide mononucleotide (NMN), auto-inhibitory interactions are released, allowing self-association of the TIR domains and subsequent activation of the NAD(+) hydrolase (NADase) activity. Self-association of TIR domains is facilitated by the octamer of SAM domains. Functionally, NAD(+) hydrolase, which plays a key role in axonal degeneration following injury by regulating NAD(+) metabolism. Acts as a negative regulator of MYD88- and TRIF-dependent toll-like receptor signaling pathway by promoting Wallerian degeneration, an injury-induced form of programmed subcellular death which involves degeneration of an axon distal to the injury site. Wallerian degeneration is triggered by NAD(+) depletion: in response to injury, SARM1 is activated and catalyzes cleavage of NAD(+) into ADP-D-ribose (ADPR), cyclic ADPR (cADPR) and nicotinamide; NAD(+) cleavage promoting cytoskeletal degradation and axon destruction. Also able to hydrolyze NADP(+), but not other NAD(+)-related molecules. Can activate neuronal cell death in response to stress. Regulates dendritic arborization through the MAPK4-JNK pathway. Involved in innate immune response: inhibits both TICAM1/TRIF- and MYD88-dependent activation of JUN/AP-1, TRIF-dependent activation of NF-kappa-B and IRF3, and the phosphorylation of MAPK14/p38. This Rattus norvegicus (Rat) protein is NAD(+) hydrolase SARM1.